Consider the following 186-residue polypeptide: MTNNLIACLIINNLTLIHFVGFEDIKIKNNIMLIKRYAIITITSLLIYSISFYLYKLFAKNNLLFLVPIFYVILIYVLILLFKVLNDLFIVYNKKSNYSNDFMLSNSSLIAITFFALDKNNGFFEGLEILILSALGILIALMSITSIKKNFDKNPKINILENEPIYFFIIFILSLIPNIIILIYNQ.

Helical transmembrane passes span 5–25, 39–59, 62–82, and 122–142; these read LIAC…FEDI, IITI…KLFA, NLLF…ILLF, and GFFE…IALM.

It is found in the cell membrane. This is an uncharacterized protein from Borreliella burgdorferi (strain ATCC 35210 / DSM 4680 / CIP 102532 / B31) (Borrelia burgdorferi).